Here is a 720-residue protein sequence, read N- to C-terminus: DNA ligase (720 aa).

NAD(+) contacts are provided by residues 60 to 64 (DYDYD), 109 to 110 (SL), and E140. K142 (N6-AMP-lysine intermediate) is an active-site residue. NAD(+)-binding residues include R163 and E201. The disordered stretch occupies residues 220-239 (GLPPFANPRNAAAGSIRQKD). Residues K320 and K344 each contribute to the NAD(+) site. Zn(2+) is bound by residues C438, C441, C456, and C461. In terms of domain architecture, BRCT spans 619 to 709 (KVADVLKGKT…VDLEKIKKED (91 aa)).

Belongs to the NAD-dependent DNA ligase family. LigA subfamily. Mn(2+) serves as cofactor. Requires Mg(2+) as cofactor.

It carries out the reaction NAD(+) + (deoxyribonucleotide)n-3'-hydroxyl + 5'-phospho-(deoxyribonucleotide)m = (deoxyribonucleotide)n+m + AMP + beta-nicotinamide D-nucleotide.. Its function is as follows. DNA ligase that catalyzes the formation of phosphodiester linkages between 5'-phosphoryl and 3'-hydroxyl groups in double-stranded DNA using NAD as a coenzyme and as the energy source for the reaction. It is essential for DNA replication and repair of damaged DNA. The sequence is that of DNA ligase from Aquifex aeolicus (strain VF5).